Consider the following 1103-residue polypeptide: Trophozoite exported protein 1 (1103 aa).

Positions 173 to 212 (KKEKIEDKKYEQDDEEENEEEEEEEEEEEGEEENKEDEEF) form a coiled coil. Disordered stretches follow at residues 178–210 (EDKK…KEDE) and 271–301 (KSYS…DNGK). Acidic residues predominate over residues 184 to 210 (QDDEEENEEEEEEEEEEEGEEENKEDE). The span at 271–280 (KSYSGDEKIN) shows a compositional bias: basic and acidic residues. 2 coiled-coil regions span residues 304–330 (DYVK…LECN) and 478–518 (YKNY…KLNN). A disordered region spans residues 544 to 601 (YFDEGENPYNRNNKNYRTDNKNSDDNNNNNNYYYNNYNSDDNYNSEDNEYNNGNYRFR). Residues 568-585 (DNNNNNNYYYNNYNSDDN) are compositionally biased toward low complexity. 3 coiled-coil regions span residues 650–791 (FRNL…LSGI), 819–932 (DEKY…IYKK), and 993–1030 (NKKL…NLSK). Residues 1050 to 1089 (CSVCMENFRNYIIIKCGHIYCNNCIFNNLKTRNRKCPQCK) form an RING-type zinc finger.

The protein localises to the host cell membrane. The chain is Trophozoite exported protein 1 from Plasmodium falciparum (isolate 3D7).